Here is a 238-residue protein sequence, read N- to C-terminus: 2-C-methyl-D-erythritol 4-phosphate cytidylyltransferase (238 aa).

This sequence belongs to the IspD/TarI cytidylyltransferase family. IspD subfamily.

The catalysed reaction is 2-C-methyl-D-erythritol 4-phosphate + CTP + H(+) = 4-CDP-2-C-methyl-D-erythritol + diphosphate. It participates in isoprenoid biosynthesis; isopentenyl diphosphate biosynthesis via DXP pathway; isopentenyl diphosphate from 1-deoxy-D-xylulose 5-phosphate: step 2/6. Catalyzes the formation of 4-diphosphocytidyl-2-C-methyl-D-erythritol from CTP and 2-C-methyl-D-erythritol 4-phosphate (MEP). The chain is 2-C-methyl-D-erythritol 4-phosphate cytidylyltransferase from Acinetobacter baumannii (strain AYE).